The following is a 773-amino-acid chain: Transducin-like enhancer protein 4 (773 aa).

Disordered regions lie at residues 1–22, 140–162, and 182–360; these read MIRD…QPAQ, HGHG…AIPP, and LPIK…ASSL. The tract at residues 1–136 is q domain; that stretch reads MIRDLSKMYP…AIIGQQLQAQ (136 aa). Positions 137 to 204 are GP domain; it reads HLSHGHGLPV…HQRDRDSIKS (68 aa). Residues 183–202 are compositionally biased toward basic and acidic residues; sequence PIKDEKKHHDNDHQRDRDSI. The segment covering 203 to 212 has biased composition (low complexity); that stretch reads KSSSVSPSAS. Residues 205-274 form a ccN domain region; sequence SSVSPSASFR…SPRGSPAHSP (70 aa). Serine 208, serine 212, and serine 222 each carry phosphoserine. Basic and acidic residues predominate over residues 215-252; that stretch reads GAEKHRNSADYSSESKKQKTEEKEIAARYDSDGEKSDD. Lysine 237 carries the N6-acetyllysine modification. Serine 245, serine 250, serine 269, and serine 273 each carry phosphoserine. The segment covering 273–289 has biased composition (basic and acidic residues); that stretch reads SPRENGLDKTRLLKKDA. Residues 275-452 are SP domain; that stretch reads RENGLDKTRL…PGGKPAYSFH (178 aa). Residue lysine 281 is modified to N6-acetyllysine. Positions 290–305 are enriched in low complexity; it reads PISPASIASSSSTPSS. Serine 292 is subject to Phosphoserine. The span at 317–328 shows a compositional bias: polar residues; the sequence is TTPVSKSNTPTP. Threonine 318 carries the phosphothreonine modification. 2 positions are modified to phosphoserine: serine 321 and serine 323. Threonine 325, threonine 327, threonine 334, and threonine 340 each carry phosphothreonine. Serine 419 is modified (phosphoserine). WD repeat units lie at residues 485–523, 531–570, 575–614, 617–656, 658–697, 699–738, and 740–773; these read NHGE…NKSP, NRDN…PRIK, SSAP…LVRQ, GHTD…QLQQ, DFTS…KYQL, LHES…SIFQ, and KESS…EVIY.

The protein belongs to the WD repeat Groucho/TLE family. As to quaternary structure, homooligomer and heterooligomer with other family members. Interacts with PAX5. Interacts with LEF1, TCF7, TCF7L1 and TCF7L2. Interacts with ZNF703; TLE4 may mediate ZNF703 transcriptional repression. Interacts with SIX3 and SIX6. Interacts with PAX2. Interacts with TLE1. Post-translationally, phosphorylated. PAX5 binding increases phosphorylation. In terms of processing, ubiquitinated by XIAP/BIRC4. In terms of tissue distribution, in all tissues examined, mostly in brain, and muscle.

It is found in the nucleus. Functionally, transcriptional corepressor that binds to a number of transcription factors. Inhibits the transcriptional activation mediated by PAX5, and by CTNNB1 and TCF family members in Wnt signaling. The effects of full-length TLE family members may be modulated by association with dominant-negative AES. Essential for the transcriptional repressor activity of SIX3 during retina and lens development and for SIX3 transcriptional auto-repression. Involved in transcriptional repression of GNRHR and enhances MSX1-mediated transcriptional repression of CGA/alpha-GSU. In Homo sapiens (Human), this protein is Transducin-like enhancer protein 4 (TLE4).